A 212-amino-acid polypeptide reads, in one-letter code: Pyridoxine/pyridoxamine 5'-phosphate oxidase (212 aa).

Substrate contacts are provided by residues 7-10 (RREY) and Lys-65. Residues 60-65 (RIVLLK), 75-76 (FT), Arg-81, Lys-82, and Gln-104 each bind FMN. Tyr-122, Arg-126, and Ser-130 together coordinate substrate. FMN contacts are provided by residues 139–140 (QS) and Trp-184. 190–192 (RLH) serves as a coordination point for substrate. Arg-194 serves as a coordination point for FMN.

This sequence belongs to the pyridoxamine 5'-phosphate oxidase family. As to quaternary structure, homodimer. The cofactor is FMN.

It catalyses the reaction pyridoxamine 5'-phosphate + O2 + H2O = pyridoxal 5'-phosphate + H2O2 + NH4(+). The enzyme catalyses pyridoxine 5'-phosphate + O2 = pyridoxal 5'-phosphate + H2O2. It functions in the pathway cofactor metabolism; pyridoxal 5'-phosphate salvage; pyridoxal 5'-phosphate from pyridoxamine 5'-phosphate: step 1/1. The protein operates within cofactor metabolism; pyridoxal 5'-phosphate salvage; pyridoxal 5'-phosphate from pyridoxine 5'-phosphate: step 1/1. Functionally, catalyzes the oxidation of either pyridoxine 5'-phosphate (PNP) or pyridoxamine 5'-phosphate (PMP) into pyridoxal 5'-phosphate (PLP). This chain is Pyridoxine/pyridoxamine 5'-phosphate oxidase, found in Pseudoalteromonas translucida (strain TAC 125).